The following is a 135-amino-acid chain: uncharacterized protein (135 aa).

A coiled-coil region spans residues 68-135 (DEVDNYIRVF…KKESEDEDEL (68 aa)). Residues 88 to 135 (EKIVGKPPKSTSAPDIDELEEEPDEETEEKSEEKTEKKKKESEDEDEL) are disordered. The span at 102-117 (DIDELEEEPDEETEEK) shows a compositional bias: acidic residues. A compositionally biased stretch (basic and acidic residues) spans 118-129 (SEEKTEKKKKES).

This is an uncharacterized protein from Acidianus hospitalis (AFV-1).